The sequence spans 348 residues: Neutral peroxidase (348 aa).

Residues 1 to 20 (MASFVARLTLALSFIALALA) form the signal peptide. A propeptide spanning residues 21 to 67 (GYSLVQNTLSSPTHTRLNLIPTWLDSTFDSADVLSYLGFGKSSGRLS) is cleaved from the precursor. Intrachain disulfides connect Cys-71–Cys-149, Cys-102–Cys-107, Cys-156–Cys-344, and Cys-235–Cys-256. His-100 serves as the catalytic Proton acceptor. Ca(2+) contacts are provided by Asp-101, Val-104, Gly-106, and Asp-108. Residues Asn-114, Asn-118, Asn-173, Asn-177, and Asn-189 are each glycosylated (N-linked (GlcNAc...) asparagine). Pro-198 provides a ligand contact to substrate. Asn-203 carries N-linked (GlcNAc...) asparagine glycosylation. His-228 serves as a coordination point for heme b. Thr-229 is a Ca(2+) binding site. Residues Asn-247 and Asn-261 are each glycosylated (N-linked (GlcNAc...) asparagine). Ca(2+) is bound by residues Asp-269, Ser-271, and Asp-276. A glycan (N-linked (GlcNAc...) asparagine) is linked at Asn-300.

Belongs to the peroxidase family. Classical plant (class III) peroxidase subfamily. It depends on Ca(2+) as a cofactor. Requires heme b as cofactor. In terms of tissue distribution, highly expressed in suspension cultured cells. Weak expression also found in the stems of intact plants. No expression in leaf, tuberous root and non-tuberous root.

It localises to the secreted. It carries out the reaction 2 a phenolic donor + H2O2 = 2 a phenolic radical donor + 2 H2O. Removal of H(2)O(2), oxidation of toxic reductants, biosynthesis and degradation of lignin, suberization, auxin catabolism, response to environmental stresses such as wounding, pathogen attack and oxidative stress. These functions might be dependent on each isozyme/isoform in each plant tissue. Functionally, may contribute to protection against cold-induced oxidative stress. This chain is Neutral peroxidase, found in Ipomoea batatas (Sweet potato).